The primary structure comprises 354 residues: Probable alcohol acetyltransferase (354 aa).

Catalysis depends on charge relay system residues Ser124 and His293.

It belongs to the AB hydrolase superfamily.

In terms of biological role, probable alcohol acetyltransferase that uses acetyl-CoA to synthesize acetate esters from various alcohols. Not involved in the synthesis of ethyl acetate. This Cyberlindnera jadinii (strain ATCC 18201 / CBS 1600 / BCRC 20928 / JCM 3617 / NBRC 0987 / NRRL Y-1542) (Torula yeast) protein is Probable alcohol acetyltransferase (EAT2).